The chain runs to 251 residues: Triosephosphate isomerase (251 aa).

Position 9–11 (9–11) interacts with substrate; it reads NWK. Residue His-95 is the Electrophile of the active site. The active-site Proton acceptor is the Glu-167. Substrate is bound by residues Gly-173, Ser-213, and 234-235; that span reads GG. Ser-213 carries the phosphoserine modification.

This sequence belongs to the triosephosphate isomerase family. Homodimer.

The protein resides in the cytoplasm. It carries out the reaction D-glyceraldehyde 3-phosphate = dihydroxyacetone phosphate. Its pathway is carbohydrate biosynthesis; gluconeogenesis. It participates in carbohydrate degradation; glycolysis; D-glyceraldehyde 3-phosphate from glycerone phosphate: step 1/1. Involved in the gluconeogenesis. Catalyzes stereospecifically the conversion of dihydroxyacetone phosphate (DHAP) to D-glyceraldehyde-3-phosphate (G3P). This is Triosephosphate isomerase from Bacillus cereus (strain ATCC 10987 / NRS 248).